The primary structure comprises 128 residues: uncharacterized protein (128 aa).

Basic and acidic residues predominate over residues 1–11; sequence MDNKKKEENPS. A disordered region spans residues 1-40; the sequence is MDNKKKEENPSKSDTSISLPPSSTGEALQNYTESEWNASD. Residues 12–37 show a composition bias toward polar residues; the sequence is KSDTSISLPPSSTGEALQNYTESEWN.

This is an uncharacterized protein from Caenorhabditis elegans.